The following is a 107-amino-acid chain: Vasopressin-neurophysin 2 (107 aa).

Cys1 and Cys6 are joined by a disulfide. Glycine amide is present on Gly9. Cystine bridges form between Cys22/Cys66, Cys25/Cys39, Cys33/Cys56, Cys40/Cys46, Cys73/Cys85, Cys79/Cys97, and Cys86/Cys91.

The protein belongs to the vasopressin/oxytocin family. In terms of assembly, interacts with vasopressin receptors V1bR/AVPR1B (Ki=85 pM), V1aR/AVPR1A (Ki=0.6 nM) and V2R/AVPR2 (Ki=4.9 nM). Interacts with oxytocin receptor (OXTR) (Ki=110 nM).

The protein localises to the secreted. In terms of biological role, neurophysin 2 specifically binds vasopressin. Its function is as follows. Vasopressin has a direct antidiuretic action on the kidney, it also causes vasoconstriction of the peripheral vessels. Acts by binding to vasopressin receptors (V1bR/AVPR1B, V1aR/AVPR1A, and V2R/AVPR2). The protein is Vasopressin-neurophysin 2 (AVP) of Balaenoptera physalus (Fin whale).